The sequence spans 450 residues: Sulfide:quinone oxidoreductase, mitochondrial (450 aa).

FAD contacts are provided by residues 53–54 (AG), Glu-75, Gln-83, and Val-118. Residues Lys-134 and Lys-173 each carry the N6-acetyllysine modification. Cys-201 serves as the catalytic Cysteine persulfide intermediate. A disulfide bridge links Cys-201 with Cys-379. Residue Asp-336 participates in FAD binding. Ser-343 is subject to Phosphoserine. Residue 344–347 (KTAA) participates in FAD binding. Residue Cys-379 is the Cysteine persulfide intermediate of the active site.

It belongs to the SQRD family. It depends on FAD as a cofactor.

Its subcellular location is the mitochondrion. It catalyses the reaction ubiquinone-10 + hydrogen sulfide + sulfite + 2 H(+) = ubiquinol-10 + thiosulfate. The enzyme catalyses a quinone + hydrogen sulfide + glutathione + H(+) = S-sulfanylglutathione + a quinol. The catalysed reaction is ubiquinone-10 + hydrogen sulfide + glutathione + H(+) = S-sulfanylglutathione + ubiquinol-10. Functionally, catalyzes the oxidation of hydrogen sulfide with the help of a quinone, such as ubiquinone-10, giving rise to thiosulfate and ultimately to sulfane (molecular sulfur) atoms. Requires an additional electron acceptor; can use sulfite, sulfide or cyanide (in vitro). It is believed the in vivo electron acceptor is glutathione. This chain is Sulfide:quinone oxidoreductase, mitochondrial, found in Mus musculus (Mouse).